A 484-amino-acid polypeptide reads, in one-letter code: Phosphomevalonate kinase erg8 (484 aa).

A disordered region spans residues 54–77 (REAASGSAHGRSDTPQAEGNVHGD). 184 to 194 (AHKTGLGSSAA) lines the ATP pocket.

Belongs to the GHMP kinase family. Mevalonate kinase subfamily.

The catalysed reaction is (R)-5-phosphomevalonate + ATP = (R)-5-diphosphomevalonate + ADP. It functions in the pathway isoprenoid biosynthesis; isopentenyl diphosphate biosynthesis via mevalonate pathway; isopentenyl diphosphate from (R)-mevalonate: step 2/3. Phosphomevalonate kinase; part of the second module of ergosterol biosynthesis pathway that includes the middle steps of the pathway. Erg8 converts 5-phosphomevalonate to 5-diphosphomevalonate. The second module is carried out in the vacuole and involves the formation of farnesyl diphosphate, which is also an important intermediate in the biosynthesis of ubiquinone, dolichol, heme and prenylated proteins. Activity by the mevalonate kinase erg12 (AFUA_4G07780) first converts mevalonate into 5-phosphomevalonate. 5-phosphomevalonate is then further converted to 5-diphosphomevalonate by the phosphomevalonate kinase erg8 (AFUA_5G10680). The diphosphomevalonate decarboxylase mvd1 (AFUA_4G07130) then produces isopentenyl diphosphate. The isopentenyl-diphosphate delta-isomerase idi1 (AFUA_6G11160) then catalyzes the 1,3-allylic rearrangement of the homoallylic substrate isopentenyl (IPP) to its highly electrophilic allylic isomer, dimethylallyl diphosphate (DMAPP). Finally the farnesyl diphosphate synthase erg20 (AFUA_5G02450) catalyzes the sequential condensation of isopentenyl pyrophosphate with dimethylallyl pyrophosphate, and then with the resultant geranylpyrophosphate to the ultimate product farnesyl pyrophosphate. The chain is Phosphomevalonate kinase erg8 from Aspergillus fumigatus (strain ATCC MYA-4609 / CBS 101355 / FGSC A1100 / Af293) (Neosartorya fumigata).